Consider the following 62-residue polypeptide: Short neurotoxin 1 (62 aa).

Positions 1–17 (MQCCNQQSSQPKTTTTC) are enriched in polar residues. Residues 1 to 20 (MQCCNQQSSQPKTTTTCPGG) are disordered. Intrachain disulfides connect cysteine 3-cysteine 24, cysteine 17-cysteine 41, cysteine 43-cysteine 54, and cysteine 55-cysteine 60.

It belongs to the three-finger toxin family. Short-chain subfamily. Type I alpha-neurotoxin sub-subfamily. Expressed by the venom gland.

It localises to the secreted. Its function is as follows. Binds to muscle nicotinic acetylcholine receptor (nAChR) and inhibit acetylcholine from binding to the receptor, thereby impairing neuromuscular transmission. The chain is Short neurotoxin 1 from Acanthophis antarcticus (Common death adder).